The chain runs to 297 residues: Protoheme IX farnesyltransferase (297 aa).

Helical transmembrane passes span 26-46 (VTQLAVFCAVIGMFLATPGMV), 48-68 (YPVLFGGIAGIWLLAGAAFAV), 96-116 (FHIIIFSIILGSLGMIILWNF), 120-140 (LTMWLTLATFVGYAVIYTWLL), 147-167 (NIVIGGLSGAMPPALGWAAVT), 174-194 (AWLLVLIIFVWTPPHFWALAL), 218-238 (LLNILLYTLILIAATLLPYIY), 243-263 (IIYLISAIVLGLMFLAYVIAL), and 276-296 (FRFSITYLSLLFAALLIDHYF).

It belongs to the UbiA prenyltransferase family. Protoheme IX farnesyltransferase subfamily.

The protein resides in the cell membrane. It carries out the reaction heme b + (2E,6E)-farnesyl diphosphate + H2O = Fe(II)-heme o + diphosphate. Its pathway is porphyrin-containing compound metabolism; heme O biosynthesis; heme O from protoheme: step 1/1. Functionally, converts heme B (protoheme IX) to heme O by substitution of the vinyl group on carbon 2 of heme B porphyrin ring with a hydroxyethyl farnesyl side group. In Polynucleobacter asymbioticus (strain DSM 18221 / CIP 109841 / QLW-P1DMWA-1) (Polynucleobacter necessarius subsp. asymbioticus), this protein is Protoheme IX farnesyltransferase.